Consider the following 358-residue polypeptide: 4-diphosphocytidyl-2-C-methyl-D-erythritol kinase (358 aa).

Lys-24 is a catalytic residue. 138-148 (PVAGGMAGGSA) is an ATP binding site. Residue Asp-186 is part of the active site.

Belongs to the GHMP kinase family. IspE subfamily.

The catalysed reaction is 4-CDP-2-C-methyl-D-erythritol + ATP = 4-CDP-2-C-methyl-D-erythritol 2-phosphate + ADP + H(+). Its pathway is isoprenoid biosynthesis; isopentenyl diphosphate biosynthesis via DXP pathway; isopentenyl diphosphate from 1-deoxy-D-xylulose 5-phosphate: step 3/6. Catalyzes the phosphorylation of the position 2 hydroxy group of 4-diphosphocytidyl-2C-methyl-D-erythritol. The sequence is that of 4-diphosphocytidyl-2-C-methyl-D-erythritol kinase from Corynebacterium jeikeium (strain K411).